The primary structure comprises 208 residues: Uracil phosphoribosyltransferase (208 aa).

Residues Arg-78, Arg-103, and 130-138 (DPMLATGGT) contribute to the 5-phospho-alpha-D-ribose 1-diphosphate site. Uracil is bound by residues Ile-193 and 198–200 (GDA). A 5-phospho-alpha-D-ribose 1-diphosphate-binding site is contributed by Asp-199.

This sequence belongs to the UPRTase family. Mg(2+) serves as cofactor.

It catalyses the reaction UMP + diphosphate = 5-phospho-alpha-D-ribose 1-diphosphate + uracil. It participates in pyrimidine metabolism; UMP biosynthesis via salvage pathway; UMP from uracil: step 1/1. Its activity is regulated as follows. Allosterically activated by GTP. In terms of biological role, catalyzes the conversion of uracil and 5-phospho-alpha-D-ribose 1-diphosphate (PRPP) to UMP and diphosphate. The sequence is that of Uracil phosphoribosyltransferase from Desulfotalea psychrophila (strain LSv54 / DSM 12343).